Consider the following 233-residue polypeptide: Nickel import system ATP-binding protein NikE (233 aa).

An ABC transporter domain is found at 2–228 (IELKHVTFGY…DRHPYTKELV (227 aa)). Residue 35–42 (GESGCGKS) coordinates ATP.

The protein belongs to the ABC transporter superfamily. The complex is composed of two ATP-binding proteins (NikD and NikE), two transmembrane proteins (NikB and NikC) and a solute-binding protein (NikA).

The protein localises to the cell membrane. It carries out the reaction Ni(2+)(out) + ATP + H2O = Ni(2+)(in) + ADP + phosphate + H(+). Part of the ABC transporter complex NikABCDE (Opp2) involved in nickel import. Probably responsible for energy coupling to the transport system. This Staphylococcus aureus (strain MSSA476) protein is Nickel import system ATP-binding protein NikE.